A 27-amino-acid polypeptide reads, in one-letter code: Cupiennin-4a (27 aa).

Glu-27 carries the post-translational modification Glutamic acid 1-amide.

Expressed by the venom gland.

It is found in the secreted. This is Cupiennin-4a from Cupiennius salei (American wandering spider).